Reading from the N-terminus, the 469-residue chain is Pancreatic lipase-related protein 2 (469 aa).

An N-terminal signal peptide occupies residues 1–17 (MLPSWTIGLLLLATVRG). Cysteine 21 and cysteine 27 are oxidised to a cystine. Residue asparagine 71 is glycosylated (N-linked (GlcNAc...) asparagine). The interval 93–105 (IHGFIDDGDSGWP) is required for galactolipase activity. Cysteine 109 and cysteine 120 are oxidised to a cystine. Serine 171 serves as the catalytic Nucleophile. Residue aspartate 195 is the Charge relay system of the active site. Positions 206, 209, 211, and 214 each coordinate Ca(2+). Cysteine 256 and cysteine 280 are joined by a disulfide. The segment at 257–279 (QKNILSTIIDINGIWQGIQDFVA) is required for galactolipase activity. Histidine 282 (charge relay system) is an active-site residue. 2 disulfide bridges follow: cysteine 304-cysteine 315 and cysteine 318-cysteine 323. Residues asparagine 353, asparagine 399, and asparagine 455 are each glycosylated (N-linked (GlcNAc...) asparagine). Residues 357–469 (WRYRVSVTLA…ENALQTLYPC (113 aa)) form the PLAT domain. Cysteine 453 and cysteine 469 are oxidised to a cystine.

The protein belongs to the AB hydrolase superfamily. Lipase family.

It localises to the secreted. It is found in the zymogen granule membrane. The protein resides in the cell projection. The protein localises to the neuron projection. It carries out the reaction a triacylglycerol + H2O = a diacylglycerol + a fatty acid + H(+). The catalysed reaction is a 1,2-diacyl-3-O-(beta-D-galactosyl)-sn-glycerol + 2 H2O = 3-beta-D-galactosyl-sn-glycerol + 2 a fatty acid + 2 H(+). It catalyses the reaction 1,2,3-tri-(9Z-octadecenoyl)-glycerol + H2O = di-(9Z)-octadecenoylglycerol + (9Z)-octadecenoate + H(+). The enzyme catalyses di-(9Z)-octadecenoylglycerol + H2O = (9Z-octadecenoyl)-glycerol + (9Z)-octadecenoate + H(+). It carries out the reaction (9Z-octadecenoyl)-glycerol + H2O = glycerol + (9Z)-octadecenoate + H(+). The catalysed reaction is 1-(9Z-octadecenoyl)-glycerol + H2O = glycerol + (9Z)-octadecenoate + H(+). It catalyses the reaction 1,2,3-tripropanoylglycerol + H2O = dipropanoylglycerol + propanoate + H(+). The enzyme catalyses 1,2,3-tributanoylglycerol + H2O = dibutanoylglycerol + butanoate + H(+). It carries out the reaction 1,2,3-trioctanoylglycerol + H2O = dioctanoylglycerol + octanoate + H(+). The catalysed reaction is 1,2-didecanoylglycerol + H2O = decanoylglycerol + decanoate + H(+). It catalyses the reaction long chain 1,2-diacyl-3-O-beta-D-galactosyl-sn-glycerol + H2O = long chain acyl-3-O-beta-D-galactosyl-sn-glycerol + a fatty acid + H(+). The enzyme catalyses 1,2-dioctanoyl-3-O-beta-D-galactosyl-sn-glycerol + H2O = octanoyl-3-(beta-D-galactosyl)-sn-glycerol + octanoate + H(+). It carries out the reaction 1,2-didodecanoyl-3-beta-D-galactosyl-sn-glycerol + H2O = dodecanoyl-3-beta-D-galactosyl-sn-glycerol + dodecanoate + H(+). The catalysed reaction is 1-beta-D-galactosyl-2,3-didodecanoyl-sn-glycerol + H2O = 1-beta-D-galactosyl-dodecanoyl-sn-glycerol + dodecanoate + H(+). It catalyses the reaction a 1,2-diacyl-3-O-[alpha-D-galactosyl-(1-&gt;6)-beta-D-galactosyl]-sn-glycerol + H2O = acyl-3-O-[alpha-D-galactosyl-(1-&gt;6)-beta-D-galactosyl]-sn-glycerol + a fatty acid + H(+). The enzyme catalyses long chain 1,2-diacyl-3-O-[alpha-D-galactosyl-(1-&gt;6)-beta-D-galactosyl]-sn-glycerol + H2O = long chain acyl-3-O-[alpha-D-galactosyl-(1-&gt;6)-beta-D-galactosyl]-sn-glycerol + a fatty acid + H(+). It carries out the reaction 1,2-dioctanoyl-3-O-[alpha-D-galactosyl-(1-&gt;6)-beta-D-galactosyl]-sn-glycerol + H2O = octanoyl-3-O-[alpha-D-galactosyl-(1-&gt;6)-beta-D-galactosyl]-sn-glycerol + octanoate + H(+). The catalysed reaction is 1,2-didodecanoyl-3-O-[alpha-D-galactosyl-(1-&gt;6)-beta-D-galactosyl]-sn-glycerol + H2O = dodecanoyl-3-O-[alpha-D-galactosyl-(1-&gt;6)-beta-D-galactosyl]-sn-glycerol + dodecanoate + H(+). It catalyses the reaction a 1,2-diacyl-sn-glycero-3-phosphocholine + H2O = a monoacyl-sn-glycero-3-phosphocholine + a fatty acid + H(+). It functions in the pathway glycerolipid metabolism; triacylglycerol degradation. The protein operates within glycolipid metabolism. Functionally, lipase that primarily hydrolyzes triglycerides and galactosylglycerides. In neonates, may play a major role in pancreatic digestion of dietary fats such as milk fat globules enriched in long-chain triglycerides. Hydrolyzes short-, medium- and long-chain fatty acyls in triglycerides without apparent positional specificity. Can completely deacylate triacylglycerols. When the liver matures and bile salt synthesis increases, likely functions mainly as a galactolipase and monoacylglycerol lipase. Hydrolyzes monogalactosyldiglycerols (MGDG) and digalactosyldiacylglycerols (DGDG) present in a plant-based diet, releasing long-chain polyunsaturated fatty acids. Hydrolyzes medium- and long-chain fatty acyls in galactolipids. May act together with LIPF to hydrolyze partially digested triglycerides. Hydrolyzes long-chain monoglycerides with high efficiency. In cytotoxic T cells, contributes to perforin-dependent cell lysis, but is unlikely to mediate direct cytotoxicity. Also has low phospholipase activity. In neurons, required for the localization of the phospholipid 1-oleoyl-2-palmitoyl-PC (OPPC) to neurite tips through acyl chain remodeling of membrane phospholipids. The resulting OPPC-rich lipid membrane domain recruits the t-SNARE protein STX4 by selectively interacting with the STX4 transmembrane domain and this promotes surface expression of the dopamine transporter SLC6A3/DAT at neurite tips by facilitating fusion of SLC6A3-containing transport vesicles with the plasma membrane. This chain is Pancreatic lipase-related protein 2, found in Bos taurus (Bovine).